Here is a 161-residue protein sequence, read N- to C-terminus: Epithelial membrane protein 2 (161 aa).

4 helical membrane-spanning segments follow: residues 1–21, 67–87, 95–115, and 137–157; these read MLVILAFIILFHITSAILLFI, TMILATILCCVGFFVFILQLF, FVFTAIIQLLSAFCVMTGASI, and FVVAWVAFPMTLLSGLMYLVL.

Belongs to the PMP-22/EMP/MP20 family. In terms of tissue distribution, expressed in the arches, orbits, pectoral fins, vessels, pronephric renal tubules, and glomeruli.

The protein resides in the golgi apparatus membrane. The protein localises to the cell membrane. It is found in the apical cell membrane. It localises to the membrane raft. Its subcellular location is the cytoplasm. The protein resides in the nucleus. The protein localises to the perinuclear region. Functionally, functions as a key regulator of cell membrane composition by regulating protein surface expression. Also, plays a role in regulation of processes including cell migration, cell proliferation, cell contraction and cell adhesion. May play a role in glomerular filtration. This is Epithelial membrane protein 2 (emp2) from Danio rerio (Zebrafish).